Consider the following 277-residue polypeptide: NH(3)-dependent NAD(+) synthetase (277 aa).

G46–S53 provides a ligand contact to ATP. A Mg(2+)-binding site is contributed by D52. Residue R141 coordinates deamido-NAD(+). Position 161 (T161) interacts with ATP. E166 is a Mg(2+) binding site. Deamido-NAD(+) is bound by residues K174 and D181. ATP-binding residues include K190 and T212. Deamido-NAD(+) is bound at residue H262–K263.

The protein belongs to the NAD synthetase family. Homodimer.

The enzyme catalyses deamido-NAD(+) + NH4(+) + ATP = AMP + diphosphate + NAD(+) + H(+). It participates in cofactor biosynthesis; NAD(+) biosynthesis; NAD(+) from deamido-NAD(+) (ammonia route): step 1/1. Its function is as follows. Catalyzes the ATP-dependent amidation of deamido-NAD to form NAD. Uses ammonia as a nitrogen source. The polypeptide is NH(3)-dependent NAD(+) synthetase (Corynebacterium efficiens (strain DSM 44549 / YS-314 / AJ 12310 / JCM 11189 / NBRC 100395)).